A 358-amino-acid polypeptide reads, in one-letter code: DNA integrity scanning protein DisA (358 aa).

The DAC domain occupies 6 to 144 (RPTLREAVAR…RGERHVLTDS (139 aa)). Residues Gly73, Leu91, and 104-108 (TRHRS) each bind ATP.

The protein belongs to the DisA family. Homooctamer. It depends on Mg(2+) as a cofactor.

It catalyses the reaction 2 ATP = 3',3'-c-di-AMP + 2 diphosphate. Participates in a DNA-damage check-point. DisA forms globular foci that rapidly scan along the chromosomes searching for lesions. In terms of biological role, also has diadenylate cyclase activity, catalyzing the condensation of 2 ATP molecules into cyclic di-AMP (c-di-AMP). c-di-AMP likely acts as a signaling molecule that may couple DNA integrity with a cellular process. The chain is DNA integrity scanning protein DisA from Mycobacterium bovis (strain ATCC BAA-935 / AF2122/97).